The following is a 336-amino-acid chain: UDP-N-acetylenolpyruvoylglucosamine reductase (336 aa).

An FAD-binding PCMH-type domain is found at 17–188 (GFDVRARYAS…TAVTLRLSRD (172 aa)). Arg164 is an active-site residue. Residue Ser236 is the Proton donor of the active site. Glu332 is an active-site residue.

This sequence belongs to the MurB family. The cofactor is FAD.

It is found in the cytoplasm. The catalysed reaction is UDP-N-acetyl-alpha-D-muramate + NADP(+) = UDP-N-acetyl-3-O-(1-carboxyvinyl)-alpha-D-glucosamine + NADPH + H(+). The protein operates within cell wall biogenesis; peptidoglycan biosynthesis. Its function is as follows. Cell wall formation. The polypeptide is UDP-N-acetylenolpyruvoylglucosamine reductase (Cupriavidus pinatubonensis (strain JMP 134 / LMG 1197) (Cupriavidus necator (strain JMP 134))).